A 373-amino-acid polypeptide reads, in one-letter code: MKLLSVLALSATASSVLGASIPVDTRAEKFLIELAPGETRWVTEEEKWALKESGQDFFDITDEEVGFTAAVAQPAVAYPTSIRHADAVNAMIATLSKENMQRDLTKLSSFHNRYYKSDYGKQSATWLQQQVQAAITASGANRYGAKVASFQHNFAQHSIIATIPGRSAEIVVVGAHQDSINGRSPMTGRAPGADDNGSGSVTILEALRGVLQDQTIVQGKAANTIEFHWYAGEEAGLLGSQAIFANYKQTGKKVKGMLNQDMTGYVKGMLDKGLKESFGIITDNVNANLTKFIRMVITKYCQIPTIDTRCGYACSDHASANRNGFPSAMVAESPIDLLDPHLHTDSDNISYLSFDHMIQHAKLVVGFVTELAK.

The N-terminal stretch at 1 to 18 (MKLLSVLALSATASSVLG) is a signal peptide. Residues 19–75 (ASIPVDTRAEKFLIELAPGETRWVTEEEKWALKESGQDFFDITDEEVGFTAAVAQPA) constitute a propeptide that is removed on maturation. Residues histidine 176 and aspartate 195 each contribute to the Zn(2+) site. Asparagine 196 carries N-linked (GlcNAc...) asparagine glycosylation. Zn(2+) is bound by residues glutamate 234 and aspartate 261. Residue asparagine 288 is glycosylated (N-linked (GlcNAc...) asparagine). An intrachain disulfide couples cysteine 310 to cysteine 314. A Zn(2+)-binding site is contributed by histidine 343. Asparagine 348 is a glycosylation site (N-linked (GlcNAc...) asparagine).

This sequence belongs to the peptidase M28 family. M28E subfamily. In terms of assembly, monomer. The cofactor is Zn(2+).

It localises to the secreted. Functionally, extracellular aminopeptidase that allows assimilation of proteinaceous substrates. In Arthroderma gypseum (strain ATCC MYA-4604 / CBS 118893) (Microsporum gypseum), this protein is Leucine aminopeptidase 1 (LAP1).